Consider the following 69-residue polypeptide: Large ribosomal subunit protein uL30 (69 aa).

Belongs to the universal ribosomal protein uL30 family. In terms of assembly, part of the 50S ribosomal subunit.

In Rhizobium etli (strain CIAT 652), this protein is Large ribosomal subunit protein uL30.